The chain runs to 1201 residues: Protein dduB (1201 aa).

The first 22 residues, 1-22 (MKFIKYLLILFLILKINYFVES), serve as a signal peptide directing secretion. At 23 to 1180 (GVDCQKNTEY…QDPSDELSTS (1158 aa)) the chain is on the extracellular side. Asn68, Asn122, Asn150, Asn185, Asn283, Asn348, Asn360, Asn437, Asn448, Asn518, Asn535, Asn554, Asn585, Asn631, Asn759, Asn815, Asn830, Asn844, Asn946, Asn1042, Asn1058, Asn1098, and Asn1108 each carry an N-linked (GlcNAc...) asparagine glycan. The helical transmembrane segment at 1181 to 1201 (SFIQLNILSLLLISIFTIFIL) threads the bilayer.

It is found in the membrane. The sequence is that of Protein dduB (dduB) from Dictyostelium discoideum (Social amoeba).